The following is a 318-amino-acid chain: NADH-ubiquinone oxidoreductase chain 1 (318 aa).

The next 8 membrane-spanning stretches (helical) occupy residues 2–22 (FMINILMLIIPILLAGAFLTL), 70–90 (MFILAPILALGLALTMWIPLP), 100–120 (LGVLFMLAMSSLAVYSILWSG), 147–167 (AIILLSVLLMSGSFTLSTLII), 172–192 (TWLILPAWPLAMMWFISTLAE), 222–242 (LFFMAEYANIIMMNMFTAILF), 253–273 (ELYTINFIIKSLLLTMLFLWI), and 294–314 (LPLTLALCMWHVSLPILTSGI).

This sequence belongs to the complex I subunit 1 family. In terms of assembly, core subunit of respiratory chain NADH dehydrogenase (Complex I) which is composed of 45 different subunits.

It localises to the mitochondrion inner membrane. The enzyme catalyses a ubiquinone + NADH + 5 H(+)(in) = a ubiquinol + NAD(+) + 4 H(+)(out). Functionally, core subunit of the mitochondrial membrane respiratory chain NADH dehydrogenase (Complex I) which catalyzes electron transfer from NADH through the respiratory chain, using ubiquinone as an electron acceptor. Essential for the catalytic activity and assembly of complex I. In Bos mutus grunniens (Wild yak), this protein is NADH-ubiquinone oxidoreductase chain 1 (MT-ND1).